We begin with the raw amino-acid sequence, 208 residues long: Putative vomeronasal receptor-like protein 4 (208 aa).

The Extracellular segment spans residues 1–19; the sequence is MEMTKLFSYIVIKNVYYPQ. A helical transmembrane segment spans residues 20–40; sequence VSFGISANTFLLLFHIFTFAY. Residues 41-48 lie on the Cytoplasmic side of the membrane; sequence THRLKPID. The helical transmembrane segment at 49-69 threads the bilayer; the sequence is MTISHLPLIHILLLFTQAILV. Residues 70 to 97 lie on the Extracellular side of the membrane; that stretch reads SSDLFESWNIQNNDLKCKIITFLNRVMR. The cysteines at positions 86 and 173 are disulfide-linked. Residues 98–118 traverse the membrane as a helical segment; it reads GVSICTTCLLSVLQAITISPS. At 119-135 the chain is on the cytoplasmic side; sequence TSFLEKFKHISANHTLG. The chain crosses the membrane as a helical span at residues 136-156; that stretch reads FILFSWVLNMFITNNLLLFIV. The Extracellular segment spans residues 157–183; sequence PTPNRIGASLLFVTEHCYVLPMSYTHR. Residues 184–204 traverse the membrane as a helical segment; it reads SLFFILMVLRDVIFIGLMVLS. Residues 205 to 208 are Cytoplasmic-facing; that stretch reads SGYG.

This sequence belongs to the G-protein coupled receptor 1 family. In terms of tissue distribution, expressed in olfactory nerve.

Its subcellular location is the cell membrane. Functionally, putative pheromone receptor. This Homo sapiens (Human) protein is Putative vomeronasal receptor-like protein 4 (VN1R17P).